The primary structure comprises 120 residues: Large ribosomal subunit protein uL18 (120 aa).

It belongs to the universal ribosomal protein uL18 family. Part of the 50S ribosomal subunit; part of the 5S rRNA/L5/L18/L25 subcomplex. Contacts the 5S and 23S rRNAs.

Functionally, this is one of the proteins that bind and probably mediate the attachment of the 5S RNA into the large ribosomal subunit, where it forms part of the central protuberance. The chain is Large ribosomal subunit protein uL18 from Rhizobium etli (strain ATCC 51251 / DSM 11541 / JCM 21823 / NBRC 15573 / CFN 42).